The sequence spans 343 residues: 4-hydroxy-2-oxovalerate aldolase (343 aa).

Positions 5–256 constitute a Pyruvate carboxyltransferase domain; the sequence is ILLCDPTLRD…ETGIDLYKIL (252 aa). 13-14 serves as a coordination point for substrate; the sequence is RD. Position 14 (Asp14) interacts with Mn(2+). His17 serves as the catalytic Proton acceptor. Residues Ser168 and His195 each coordinate substrate. Residues His195 and His197 each contribute to the Mn(2+) site.

This sequence belongs to the 4-hydroxy-2-oxovalerate aldolase family. As to quaternary structure, interacts with MhpF.

The enzyme catalyses (S)-4-hydroxy-2-oxopentanoate = acetaldehyde + pyruvate. The protein operates within aromatic compound metabolism; 3-phenylpropanoate degradation. Functionally, catalyzes the retro-aldol cleavage of 4-hydroxy-2-oxopentanoate to pyruvate and acetaldehyde. Is involved in the meta-cleavage pathway for the degradation of aromatic compounds. The chain is 4-hydroxy-2-oxovalerate aldolase from Pectobacterium atrosepticum (strain SCRI 1043 / ATCC BAA-672) (Erwinia carotovora subsp. atroseptica).